The sequence spans 284 residues: MEMO1 family protein YN1551_0739 (284 aa).

Belongs to the MEMO1 family.

This is MEMO1 family protein YN1551_0739 from Saccharolobus islandicus (strain Y.N.15.51 / Yellowstone #2) (Sulfolobus islandicus).